The primary structure comprises 288 residues: 33 kDa chaperonin (288 aa).

2 cysteine pairs are disulfide-bonded: cysteine 235/cysteine 237 and cysteine 268/cysteine 271.

The protein belongs to the HSP33 family. In terms of processing, under oxidizing conditions two disulfide bonds are formed involving the reactive cysteines. Under reducing conditions zinc is bound to the reactive cysteines and the protein is inactive.

It is found in the cytoplasm. Its function is as follows. Redox regulated molecular chaperone. Protects both thermally unfolding and oxidatively damaged proteins from irreversible aggregation. Plays an important role in the bacterial defense system toward oxidative stress. The sequence is that of 33 kDa chaperonin from Streptococcus thermophilus (strain ATCC BAA-250 / LMG 18311).